The sequence spans 185 residues: CASP-like protein 2D1 (185 aa).

The Cytoplasmic portion of the chain corresponds to 1–15 (MRTHIDDSASGKNHH). A helical transmembrane segment spans residues 16-36 (LPMLWFFDSSLRLCAIPLSVA). The Extracellular segment spans residues 37–64 (TMWITVTNKEDNSSYGMLKYNNLSALKY). Asn-48 and Asn-58 each carry an N-linked (GlcNAc...) asparagine glycan. A helical membrane pass occupies residues 65-85 (MVLVSALCACYALLAAACSLV). Topologically, residues 86–92 (RCFVSKA) are cytoplasmic. The helical transmembrane segment at 93-113 (WIFFVSDQIVAYLAITSVAAV) threads the bilayer. At 114-145 (MEMYYLAYNGAKEDSWSEACSSYGSFCSKVKL) the chain is on the extracellular side. Residues 146-166 (ALILHTITFCCFFVIAVISAF) traverse the membrane as a helical segment. Residues 167–185 (RAFSVFDPPFVNSQEVQGD) are Cytoplasmic-facing.

It belongs to the Casparian strip membrane proteins (CASP) family. As to quaternary structure, homodimer and heterodimers.

It localises to the cell membrane. The protein is CASP-like protein 2D1 of Glycine max (Soybean).